The chain runs to 488 residues: Aspartyl/glutamyl-tRNA(Asn/Gln) amidotransferase subunit B (488 aa).

Belongs to the GatB/GatE family. GatB subfamily. Heterotrimer of A, B and C subunits.

The catalysed reaction is L-glutamyl-tRNA(Gln) + L-glutamine + ATP + H2O = L-glutaminyl-tRNA(Gln) + L-glutamate + ADP + phosphate + H(+). It catalyses the reaction L-aspartyl-tRNA(Asn) + L-glutamine + ATP + H2O = L-asparaginyl-tRNA(Asn) + L-glutamate + ADP + phosphate + 2 H(+). In terms of biological role, allows the formation of correctly charged Asn-tRNA(Asn) or Gln-tRNA(Gln) through the transamidation of misacylated Asp-tRNA(Asn) or Glu-tRNA(Gln) in organisms which lack either or both of asparaginyl-tRNA or glutaminyl-tRNA synthetases. The reaction takes place in the presence of glutamine and ATP through an activated phospho-Asp-tRNA(Asn) or phospho-Glu-tRNA(Gln). This Ralstonia pickettii (strain 12J) protein is Aspartyl/glutamyl-tRNA(Asn/Gln) amidotransferase subunit B.